The chain runs to 393 residues: Dihydrolipoyllysine-residue succinyltransferase component of 2-oxoglutarate dehydrogenase complex (393 aa).

The region spanning 3 to 78 (RINILVPDLP…KSNQILGNIV (76 aa)) is the Lipoyl-binding domain. Lysine 44 bears the N6-lipoyllysine mark. Catalysis depends on residues histidine 364 and aspartate 368.

This sequence belongs to the 2-oxoacid dehydrogenase family. In terms of assembly, forms a 24-polypeptide structural core with octahedral symmetry. Part of the 2-oxoglutarate dehydrogenase (OGDH) complex composed of E1 (2-oxoglutarate dehydrogenase), E2 (dihydrolipoamide succinyltransferase) and E3 (dihydrolipoamide dehydrogenase); the complex contains multiple copies of the three enzymatic components (E1, E2 and E3). It depends on (R)-lipoate as a cofactor.

The enzyme catalyses N(6)-[(R)-dihydrolipoyl]-L-lysyl-[protein] + succinyl-CoA = N(6)-[(R)-S(8)-succinyldihydrolipoyl]-L-lysyl-[protein] + CoA. Its pathway is amino-acid degradation; L-lysine degradation via saccharopine pathway; glutaryl-CoA from L-lysine: step 6/6. Functionally, E2 component of the 2-oxoglutarate dehydrogenase (OGDH) complex which catalyzes the second step in the conversion of 2-oxoglutarate to succinyl-CoA and CO(2). The chain is Dihydrolipoyllysine-residue succinyltransferase component of 2-oxoglutarate dehydrogenase complex (sucB) from Buchnera aphidicola subsp. Schizaphis graminum (strain Sg).